We begin with the raw amino-acid sequence, 1043 residues long: Isoleucine--tRNA ligase (1043 aa).

The 'HIGH' region signature appears at 49 to 59; sequence PFATGLPHYGH. Positions 592–596 match the 'KMSKS' region motif; it reads KMSKR. Lys595 lines the ATP pocket.

The protein belongs to the class-I aminoacyl-tRNA synthetase family. IleS type 2 subfamily. In terms of assembly, monomer. Requires Zn(2+) as cofactor.

The protein resides in the cytoplasm. It carries out the reaction tRNA(Ile) + L-isoleucine + ATP = L-isoleucyl-tRNA(Ile) + AMP + diphosphate. In terms of biological role, catalyzes the attachment of isoleucine to tRNA(Ile). As IleRS can inadvertently accommodate and process structurally similar amino acids such as valine, to avoid such errors it has two additional distinct tRNA(Ile)-dependent editing activities. One activity is designated as 'pretransfer' editing and involves the hydrolysis of activated Val-AMP. The other activity is designated 'posttransfer' editing and involves deacylation of mischarged Val-tRNA(Ile). The polypeptide is Isoleucine--tRNA ligase (Chlamydia caviae (strain ATCC VR-813 / DSM 19441 / 03DC25 / GPIC) (Chlamydophila caviae)).